The following is a 611-amino-acid chain: Nuclear cap-binding protein subunit 3 (611 aa).

The segment at 1–44 (MAAVRGLRVSVKAGGGAEPEPMEVEEGEVEAAADRASPREVVSG) is disordered. The segment covering 20–31 (EPMEVEEGEVEA) has biased composition (acidic residues). Residues 108–169 (ETLYVYGVDD…LSSMPTNEKG (62 aa)) form an RNA recognition motif (RRM) domain region. The WLDD motif; essential for 7-methylguanosine-containing mRNA cap binding signature appears at 137–140 (WLDD). Disordered regions lie at residues 159–230 (NLSS…PDTL), 338–360 (EEPI…DDRV), 373–393 (RERE…EMDY), 423–568 (KTIR…DSVL), and 583–611 (RQKK…DTDS). Positions 168-179 (KGQRKKDGEHSS) are enriched in basic and acidic residues. 2 stretches are compositionally biased toward acidic residues: residues 196 to 218 (DETE…DETE) and 339 to 358 (EPIE…DEDD). The span at 423–439 (KTIRNSMRSDSVGNSVK) shows a compositional bias: polar residues. Residues 446–463 (SHAEKPADVRLILEEKRQ) are compositionally biased toward basic and acidic residues. Over residues 464–475 (STASRQQSSSGK) the composition is skewed to low complexity. 2 stretches are compositionally biased toward basic and acidic residues: residues 501–511 (SRREPLSDVHS) and 544–556 (PKDK…KSEK). Residues 602–611 (ESSSGSDTDS) are compositionally biased toward low complexity.

Belongs to the NCBP3 family. In terms of assembly, component of an alternative cap-binding complex (CBC) composed of NCBP1/CBP80 and NCBP3.

The protein localises to the nucleus. It is found in the cytoplasm. In terms of biological role, associates with NCBP1/CBP80 to form an alternative cap-binding complex (CBC) which plays a key role in mRNA export. NCBP3 serves as adapter protein linking the capped RNAs (m7GpppG-capped RNA) to NCBP1/CBP80. Unlike the conventional CBC with NCBP2 which binds both small nuclear RNA (snRNA) and messenger (mRNA) and is involved in their export from the nucleus, the alternative CBC with NCBP3 does not bind snRNA and associates only with mRNA thereby playing a role in only mRNA export. The chain is Nuclear cap-binding protein subunit 3 from Xenopus tropicalis (Western clawed frog).